Reading from the N-terminus, the 182-residue chain is Putative CTD phosphatase-like protein 355R (182 aa).

In terms of domain architecture, FCP1 homology spans 1-180 (MKNIFLDLDN…MRLKDVLNRH (180 aa)).

This sequence belongs to the IIV-6 355R family.

In terms of biological role, may function as a phosphatase. This Invertebrate iridescent virus 6 (IIV-6) protein is Putative CTD phosphatase-like protein 355R.